We begin with the raw amino-acid sequence, 87 residues long: Asparagine--tRNA ligase, cytoplasmic (87 aa).

It belongs to the class-II aminoacyl-tRNA synthetase family.

It is found in the cytoplasm. It catalyses the reaction tRNA(Asn) + L-asparagine + ATP = L-asparaginyl-tRNA(Asn) + AMP + diphosphate + H(+). This is Asparagine--tRNA ligase, cytoplasmic (DED81) from Saccharomyces paradoxus (Yeast).